The chain runs to 509 residues: Maturase K (509 aa).

It belongs to the intron maturase 2 family. MatK subfamily.

It localises to the plastid. Its subcellular location is the chloroplast. Functionally, usually encoded in the trnK tRNA gene intron. Probably assists in splicing its own and other chloroplast group II introns. The chain is Maturase K from Anthocercis angustifolia (Narrow-leaf ray-flower).